A 430-amino-acid polypeptide reads, in one-letter code: MANVVVVGAQWGDEGKGKIVDWLAEQADVVVRFQGGHNAGHTLVIDGVTYKLSLLPSGVVRGGTLSVIGNGVVVDPWHLVDEIARIGTQGVSITPETLRIADNATLILPLHRELDHFRETANATLKIGTTKRGIGPAYEDKVGRRAIRVVDLADEALLGAKIERLLAHHNALRRGLGIEEVDGAALKAELLAIAPKILPYADTVWVLLDEARRGGQRILFEGAQGALLDVDHGTYPYVTSSNIVAAQAATGSGLGPSAIGYVLGIVKAYTTRVGEGPFPTELTDAIGEKIGERGREFGVVTGRKRRCGWFDAALVRQTVRTSGIDGIALTKLDILDGFETIKICTGYRLDGRLIDHLPASQADQARVEPVYETIDGWFETTAGARSWAELPAQAIKYVRRIEELIGATVALLSTSPERDDTILVHNPFED.

Residues 12–18 (GDEGKGK) and 40–42 (GHT) contribute to the GTP site. Aspartate 13 acts as the Proton acceptor in catalysis. 2 residues coordinate Mg(2+): aspartate 13 and glycine 40. IMP contacts are provided by residues 13-16 (DEGK), 38-41 (NAGH), threonine 130, arginine 144, glutamine 224, threonine 239, and arginine 303. Histidine 41 functions as the Proton donor in the catalytic mechanism. 299–305 (VVTGRKR) is a substrate binding site. GTP-binding positions include arginine 305, 331–333 (KLD), and 413–415 (STS).

This sequence belongs to the adenylosuccinate synthetase family. As to quaternary structure, homodimer. It depends on Mg(2+) as a cofactor.

It is found in the cytoplasm. The catalysed reaction is IMP + L-aspartate + GTP = N(6)-(1,2-dicarboxyethyl)-AMP + GDP + phosphate + 2 H(+). It functions in the pathway purine metabolism; AMP biosynthesis via de novo pathway; AMP from IMP: step 1/2. Its function is as follows. Plays an important role in the de novo pathway of purine nucleotide biosynthesis. Catalyzes the first committed step in the biosynthesis of AMP from IMP. The polypeptide is Adenylosuccinate synthetase (Methylobacterium sp. (strain 4-46)).